Here is a 247-residue protein sequence, read N- to C-terminus: Phosphoribosylaminoimidazole-succinocarboxamide synthase (247 aa).

This sequence belongs to the SAICAR synthetase family.

It catalyses the reaction 5-amino-1-(5-phospho-D-ribosyl)imidazole-4-carboxylate + L-aspartate + ATP = (2S)-2-[5-amino-1-(5-phospho-beta-D-ribosyl)imidazole-4-carboxamido]succinate + ADP + phosphate + 2 H(+). It functions in the pathway purine metabolism; IMP biosynthesis via de novo pathway; 5-amino-1-(5-phospho-D-ribosyl)imidazole-4-carboxamide from 5-amino-1-(5-phospho-D-ribosyl)imidazole-4-carboxylate: step 1/2. The sequence is that of Phosphoribosylaminoimidazole-succinocarboxamide synthase from Prochlorococcus marinus (strain NATL1A).